The following is a 224-amino-acid chain: Flagellar L-ring protein (224 aa).

Residues 1 to 15 (MKWYLVALSGLLLSG) form the signal peptide. Residue Cys16 is the site of N-palmitoyl cysteine attachment. Cys16 carries the S-diacylglycerol cysteine lipid modification.

The protein belongs to the FlgH family. In terms of assembly, the basal body constitutes a major portion of the flagellar organelle and consists of four rings (L,P,S, and M) mounted on a central rod.

It localises to the cell outer membrane. The protein resides in the bacterial flagellum basal body. Functionally, assembles around the rod to form the L-ring and probably protects the motor/basal body from shearing forces during rotation. The protein is Flagellar L-ring protein of Trichlorobacter lovleyi (strain ATCC BAA-1151 / DSM 17278 / SZ) (Geobacter lovleyi).